A 210-amino-acid polypeptide reads, in one-letter code: UPF0173 protein PF0020 (210 aa).

This sequence belongs to the UPF0173 family.

The protein is UPF0173 protein PF0020 of Pyrococcus furiosus (strain ATCC 43587 / DSM 3638 / JCM 8422 / Vc1).